A 113-amino-acid polypeptide reads, in one-letter code: Large ribosomal subunit protein uL22 (113 aa).

Belongs to the universal ribosomal protein uL22 family. Part of the 50S ribosomal subunit.

Its function is as follows. This protein binds specifically to 23S rRNA; its binding is stimulated by other ribosomal proteins, e.g. L4, L17, and L20. It is important during the early stages of 50S assembly. It makes multiple contacts with different domains of the 23S rRNA in the assembled 50S subunit and ribosome. Functionally, the globular domain of the protein is located near the polypeptide exit tunnel on the outside of the subunit, while an extended beta-hairpin is found that lines the wall of the exit tunnel in the center of the 70S ribosome. The protein is Large ribosomal subunit protein uL22 of Bacillus cytotoxicus (strain DSM 22905 / CIP 110041 / 391-98 / NVH 391-98).